The following is a 373-amino-acid chain: 3 beta-hydroxysteroid dehydrogenase/Delta 5--&gt;4-isomerase type 1 (373 aa).

NADP(+) contacts are provided by residues 10–15, Y155, and K159; that span reads GAGGFV. The Proton donor role is filled by K159. A helical transmembrane segment spans residues 288 to 308; that stretch reads LPLLYWLAFLLETVSFLLRPF.

This sequence belongs to the 3-beta-HSD family. Adrenal glands, kidney, testes and ovaries.

The protein localises to the endoplasmic reticulum membrane. It localises to the mitochondrion membrane. The catalysed reaction is a 3beta-hydroxy-Delta(5)-steroid + NAD(+) = a 3-oxo-Delta(5)-steroid + NADH + H(+). It carries out the reaction pregnenolone + NAD(+) = pregn-5-ene-3,20-dione + NADH + H(+). The enzyme catalyses 3beta-hydroxyandrost-5-en-17-one + NAD(+) = androst-5-ene-3,17-dione + NADH + H(+). It catalyses the reaction androst-5-en-3beta,17beta-diol + NAD(+) = 17beta-hydroxy-androst-5-en-3-one + NADH + H(+). The catalysed reaction is a 3beta-hydroxysteroid + NADP(+) = a 3-oxosteroid + NADPH + H(+). It carries out the reaction 5alpha-androstane-3beta,17beta-diol + NADP(+) = 17beta-hydroxy-5alpha-androstan-3-one + NADPH + H(+). The enzyme catalyses 3beta-hydroxy-5alpha-androstan-17-one + NADP(+) = 5alpha-androstan-3,17-dione + NADPH + H(+). It catalyses the reaction a 3-oxo-Delta(5)-steroid = a 3-oxo-Delta(4)-steroid. The catalysed reaction is pregn-5-ene-3,20-dione = progesterone. It carries out the reaction androst-5-ene-3,17-dione = androst-4-ene-3,17-dione. The enzyme catalyses 17beta-hydroxy-androst-5-en-3-one = testosterone. It catalyses the reaction 5alpha-androstane-3beta,17beta-diol + NAD(+) = 17beta-hydroxy-5alpha-androstan-3-one + NADH + H(+). It participates in steroid hormone biosynthesis. Its pathway is steroid metabolism. Its function is as follows. A bifunctional enzyme responsible for the oxidation and isomerization of 3beta-hydroxy-Delta(5)-steroid precursors to 3-oxo-Delta(4)-steroids, an essential step in steroid hormone biosynthesis. Specifically catalyzes the conversion of pregnenolone to progesterone, dehydroepiandrosterone (DHEA) to 4-androstenedione, and androstenediol to testosterone. Additionally, catalyzes the interconversion between 3beta-hydroxy and 3-oxo-5alpha-androstane steroids controlling the bioavalability of the active forms. Specifically converts dihydrotestosterone to its inactive form 5alpha-androstanediol, that does not bind androgen receptor/AR. Also converts androstanedione, a precursor of testosterone and estrone, to epiandrosterone. Expected to use NAD(+) as preferred electron donor for the 3beta-hydroxy-steroid dehydrogenase activity and NADPH for the 3-ketosteroid reductase activity. The chain is 3 beta-hydroxysteroid dehydrogenase/Delta 5--&gt;4-isomerase type 1 from Rattus norvegicus (Rat).